A 545-amino-acid chain; its full sequence is Chaperonin GroEL 2 (545 aa).

ATP is bound by residues 29 to 32 (TLGP), 86 to 90 (DGTTT), G414, and D499.

It belongs to the chaperonin (HSP60) family. In terms of assembly, forms a cylinder of 14 subunits composed of two heptameric rings stacked back-to-back. Interacts with the co-chaperonin GroES.

Its subcellular location is the cytoplasm. It carries out the reaction ATP + H2O + a folded polypeptide = ADP + phosphate + an unfolded polypeptide.. Its function is as follows. Together with its co-chaperonin GroES, plays an essential role in assisting protein folding. The GroEL-GroES system forms a nano-cage that allows encapsulation of the non-native substrate proteins and provides a physical environment optimized to promote and accelerate protein folding. This chain is Chaperonin GroEL 2, found in Chloroflexus aurantiacus (strain ATCC 29366 / DSM 635 / J-10-fl).